A 118-amino-acid polypeptide reads, in one-letter code: MICOS complex subunit MIC13 (118 aa).

Over 1–7 the chain is Mitochondrial matrix; it reads MVPRVWS. A helical transmembrane segment spans residues 8–26; the sequence is LMRFLIKGSVAGGAIYLVY. The Mitochondrial intermembrane portion of the chain corresponds to 27-118; sequence DQDPLGPSDK…GWEYLKERTK (92 aa).

Belongs to the MICOS complex subunit Mic13 family. Component of the mitochondrial contact site and cristae organizing system (MICOS) complex, composed of at least MICOS10/MIC10, CHCHD3/MIC19, CHCHD6/MIC25, APOO/MIC26, MICOS13/MIC13, APOOL/MIC27 and IMMT/MIC60. The MICOS complex associates with mitochondrial outer membrane proteins SAMM50, MTX1 and MTX2 (together described as components of the mitochondrial outer membrane sorting assembly machinery (SAM) complex) and DNAJC11, mitochondrial inner membrane protein TMEM11 and with HSPA9. The MICOS and SAM complexes together with DNAJC11 are part of a large protein complex spanning both membranes termed the mitochondrial intermembrane space bridging (MIB) complex.

The protein localises to the mitochondrion inner membrane. Its function is as follows. Component of the MICOS complex, a large protein complex of the mitochondrial inner membrane that plays crucial roles in the maintenance of crista junctions, inner membrane architecture, and formation of contact sites to the outer membrane. Constituent of mature MICOS complex, it is required for the formation of cristae junction (CJ) and maintenance of cristae morphology. Required for the incorporation of MICOS10/MIC10 into the MICOS complex. This Sus scrofa (Pig) protein is MICOS complex subunit MIC13.